The following is a 374-amino-acid chain: Carbamoyl phosphate synthase small chain (374 aa).

Residues 1–185 (MKAILALEDG…DVSSGYKWSD (185 aa)) form a CPSase region. The L-glutamine site is built by Ser-45, Gly-237, and Gly-239. A Glutamine amidotransferase type-1 domain is found at 189–374 (RLVLVDYGVK…RNLVKDATGK (186 aa)). Cys-264 serves as the catalytic Nucleophile. Leu-265, Gln-268, Asn-306, Gly-308, and Phe-309 together coordinate L-glutamine. Active-site residues include His-347 and Glu-349.

Belongs to the CarA family. Composed of two chains; the small (or glutamine) chain promotes the hydrolysis of glutamine to ammonia, which is used by the large (or ammonia) chain to synthesize carbamoyl phosphate. Tetramer of heterodimers (alpha,beta)4.

The enzyme catalyses hydrogencarbonate + L-glutamine + 2 ATP + H2O = carbamoyl phosphate + L-glutamate + 2 ADP + phosphate + 2 H(+). It carries out the reaction L-glutamine + H2O = L-glutamate + NH4(+). Its pathway is amino-acid biosynthesis; L-arginine biosynthesis; carbamoyl phosphate from bicarbonate: step 1/1. It participates in pyrimidine metabolism; UMP biosynthesis via de novo pathway; (S)-dihydroorotate from bicarbonate: step 1/3. Functionally, small subunit of the glutamine-dependent carbamoyl phosphate synthetase (CPSase). CPSase catalyzes the formation of carbamoyl phosphate from the ammonia moiety of glutamine, carbonate, and phosphate donated by ATP, constituting the first step of 2 biosynthetic pathways, one leading to arginine and/or urea and the other to pyrimidine nucleotides. The small subunit (glutamine amidotransferase) binds and cleaves glutamine to supply the large subunit with the substrate ammonia. This is Carbamoyl phosphate synthase small chain from Maridesulfovibrio salexigens (strain ATCC 14822 / DSM 2638 / NCIMB 8403 / VKM B-1763) (Desulfovibrio salexigens).